We begin with the raw amino-acid sequence, 239 residues long: MATTWPPRTVIRKSSGLRTLESALQRSGLGPVAGVDEVGRGACAGPLVVAACALGPNRYESLAALDDSKKLTEKTREKLFPLICRYALAYHVVFIPSVEVDRRGVHVANIEGMRRAVAGLSVRPGYVLSDGFRVPGLSVPSLPVIGGDAAAACIAAASVLAKVSRDRLMVAMDTQYPGYGFAEHKGYSTRAHTLALTQLGPCPEHRRSFINVRRVATRSNGAATAEREADPPQERDGTG.

The region spanning 30–221 (GPVAGVDEVG…VRRVATRSNG (192 aa)) is the RNase H type-2 domain. Aspartate 36, glutamate 37, and aspartate 130 together coordinate a divalent metal cation. The disordered stretch occupies residues 217–239 (TRSNGAATAEREADPPQERDGTG). A compositionally biased stretch (basic and acidic residues) spans 225–239 (AEREADPPQERDGTG).

This sequence belongs to the RNase HII family. Requires Mn(2+) as cofactor. The cofactor is Mg(2+).

It localises to the cytoplasm. The enzyme catalyses Endonucleolytic cleavage to 5'-phosphomonoester.. Its function is as follows. Endonuclease that specifically degrades the RNA of RNA-DNA hybrids. In Mycobacterium ulcerans (strain Agy99), this protein is Ribonuclease HII.